Reading from the N-terminus, the 149-residue chain is D-aminoacyl-tRNA deacylase (149 aa).

Residues 137 to 138 (GP) carry the Gly-cisPro motif, important for rejection of L-amino acids motif.

This sequence belongs to the DTD family. In terms of assembly, homodimer.

The protein resides in the cytoplasm. It catalyses the reaction glycyl-tRNA(Ala) + H2O = tRNA(Ala) + glycine + H(+). The enzyme catalyses a D-aminoacyl-tRNA + H2O = a tRNA + a D-alpha-amino acid + H(+). Functionally, an aminoacyl-tRNA editing enzyme that deacylates mischarged D-aminoacyl-tRNAs. Also deacylates mischarged glycyl-tRNA(Ala), protecting cells against glycine mischarging by AlaRS. Acts via tRNA-based rather than protein-based catalysis; rejects L-amino acids rather than detecting D-amino acids in the active site. By recycling D-aminoacyl-tRNA to D-amino acids and free tRNA molecules, this enzyme counteracts the toxicity associated with the formation of D-aminoacyl-tRNA entities in vivo and helps enforce protein L-homochirality. The protein is D-aminoacyl-tRNA deacylase of Clostridium botulinum (strain Kyoto / Type A2).